The sequence spans 73 residues: ATGNVWAKDGYLVIIKTGCKYNCYILGKNKYCNSECKEVGAGYGYCYAFGCWCEGLPESIPTWPLPDKTCGTK.

The N-terminal stretch at 1–7 is a signal peptide; sequence ATGNVWA. The 64-residue stretch at 8 to 71 folds into the LCN-type CS-alpha/beta domain; the sequence is KDGYLVIIKT…TWPLPDKTCG (64 aa). 4 disulfides stabilise this stretch: C19–C70, C23–C46, C32–C51, and C36–C53. C70 is modified (cysteine amide). The propeptide occupies 71–73; the sequence is GTK.

Belongs to the long (4 C-C) scorpion toxin superfamily. Sodium channel inhibitor family. Beta subfamily. As to expression, expressed by the venom gland.

It is found in the secreted. In terms of biological role, beta toxins bind voltage-independently at site-4 of sodium channels (Nav) and shift the voltage of activation toward more negative potentials thereby affecting sodium channel activation and promoting spontaneous and repetitive firing. The chain is Neurotoxin Cex13 from Centruroides exilicauda (Bark scorpion).